The chain runs to 92 residues: Defensin-like protein 96 (92 aa).

The N-terminal stretch at 1-29 is a signal peptide; the sequence is MGSLRLSTVAIAVVVCLSILLISPTEVDG. 4 cysteine pairs are disulfide-bonded: Cys33–Cys80, Cys40–Cys65, Cys49–Cys77, and Cys53–Cys79.

This sequence belongs to the DEFL family.

It is found in the secreted. The sequence is that of Defensin-like protein 96 from Arabidopsis thaliana (Mouse-ear cress).